Here is a 942-residue protein sequence, read N- to C-terminus: Calcium-activated chloride channel regulator 2 (942 aa).

The N-terminal stretch at 1-32 (MTHRDSTGPVIGLKLVTLLFTLSPELLFLGAG) is a signal peptide. The Extracellular segment spans residues 33–905 (LKLKENGYDG…SRDDLILKGV (873 aa)). Residues 54 to 205 (DLKLITNIKE…CSSDITGVFV (152 aa)) form a metalloprotease domain region. Residues Asn-74 and Asn-97 are each glycosylated (N-linked (GlcNAc...) asparagine). His-164 contacts Zn(2+). Residue Glu-165 is part of the active site. Residues His-168 and Asp-175 each coordinate Zn(2+). 4 N-linked (GlcNAc...) asparagine glycosylation sites follow: Asn-231, Asn-235, Asn-254, and Asn-286. One can recognise a VWFA domain in the interval 311–483 (VVCLVIDVSR…NGMTEAFVRI (173 aa)). Residues Asn-522, Asn-580, Asn-637, and Asn-821 are each glycosylated (N-linked (GlcNAc...) asparagine). A helical membrane pass occupies residues 906–926 (LTTVGLIAILCLIMVVAHCIF). Residues 927–942 (NRKKRPSRKENETKFL) lie on the Cytoplasmic side of the membrane.

It belongs to the CLCR family. The translation product is autoproteolytically cleaved by the metalloprotease domain in the endoplasmic reticulum into a N-terminal and a C-terminal products that remain physically associated with each other. The cleavage is necessary for calcium-activated chloride channel (CaCC) activation activity. In terms of processing, N-glycosylated. Highly expressed in eye, spleen, lung, kidney, uterus, and endothelial cells. Weakly expressed in heart and throughout the gastrointestinal tract. Highly expressed in mammary cell lines. Its expression in immortalized cell line HC11 correlates with slow or arrested growth. Re-expression in mammary tumor cells reduces colony survival.

Its subcellular location is the cell membrane. The protein localises to the basal cell membrane. The protein resides in the cell junction. Functionally, plays a role in modulating chloride current across the plasma membrane in a calcium-dependent manner, and cell adhesion. Involved in basal cell adhesion and/or stratification of squamous epithelia. May act as a tumor suppressor in breast and colorectal cancer. Plays a key role for cell adhesion in the beginning stages of lung metastasis via the binding to ITGB4. In Mus musculus (Mouse), this protein is Calcium-activated chloride channel regulator 2 (Clca2).